The following is a 238-amino-acid chain: MAKRSKAYQQAAELVDRARLYAPLEAAELAKKTAKVKMDPTVEVAMRLGVDPRKADQMVRGTVNLPHGTGKTARVIVFAVGDKAAEAEAAGADAVGSEDLIERIQGGWLDFDAAIATPDQMAKVGKIARVLGPRGLMPNPKTGTVTPNVTKAVADIKGGKINFRVDKQANLHIVIGKASFDTDKLVENYAAALDEILRAKPSTSKGRYLKKVTFTTTMGPGIPVDPNRTRNLLEPAQV.

It belongs to the universal ribosomal protein uL1 family. As to quaternary structure, part of the 50S ribosomal subunit.

In terms of biological role, binds directly to 23S rRNA. The L1 stalk is quite mobile in the ribosome, and is involved in E site tRNA release. Its function is as follows. Protein L1 is also a translational repressor protein, it controls the translation of the L11 operon by binding to its mRNA. This chain is Large ribosomal subunit protein uL1, found in Saccharopolyspora erythraea (strain ATCC 11635 / DSM 40517 / JCM 4748 / NBRC 13426 / NCIMB 8594 / NRRL 2338).